The sequence spans 782 residues: E3 ubiquitin-protein ligase SopA (782 aa).

A disordered region spans residues 137-171 (VSVSANNRPTVSEGRTPPVSPSLSLQATSSPSSPA). Low complexity predominate over residues 157–171 (PSLSLQATSSPSSPA). The active-site Glycyl thioester intermediate is the C753.

The protein belongs to the SopA E3 ligase family. Ubiquitinated in the presence of host E1 ubiquitin-activating enzyme, E2 ubiquitin-conjugating enzyme and ubiquitin.

The protein localises to the secreted. The protein resides in the host cell. The enzyme catalyses S-ubiquitinyl-[E2 ubiquitin-conjugating enzyme]-L-cysteine + [acceptor protein]-L-lysine = [E2 ubiquitin-conjugating enzyme]-L-cysteine + N(6)-ubiquitinyl-[acceptor protein]-L-lysine.. In terms of biological role, effector proteins function to alter host cell physiology and promote bacterial survival in host tissues. This protein is an E3 ubiquitin ligase that interferes with host's ubiquitination pathway. This chain is E3 ubiquitin-protein ligase SopA (sopA), found in Salmonella enteritidis PT4 (strain P125109).